A 463-amino-acid polypeptide reads, in one-letter code: Type IV secretion system protein PtlD homolog (463 aa).

The N-terminal stretch at 1-24 (MAGLSRILLSCTLACLLAGQAAQA) is a signal peptide. Transmembrane regions (helical) follow at residues 118–138 (LQPLVYSMMTLLVLLTGYALL), 232–252 (WLLCAMIVATSAGGWLCLAAS), 253–273 (LLIVPGLIVTLLLSLGPLFLV), 294–314 (ALVFMALGTPAVGLLSDVLAG), and 333–353 (MLAATLCATATLMLLTLVPLA). The span at 376-410 (AHRQAAARQYAPRPAAAAAAAGPHQAGTYAASATP) shows a compositional bias: low complexity. The tract at residues 376–463 (AHRQAAARQY…RVLPRKPNLP (88 aa)) is disordered. Pro residues predominate over residues 411–420 (APAPARPAPS). The segment covering 441–455 (VRRDDRPAPAPDRRV) has biased composition (basic and acidic residues).

It localises to the cell membrane. The sequence is that of Type IV secretion system protein PtlD homolog (ptlD) from Bordetella parapertussis (strain 12822 / ATCC BAA-587 / NCTC 13253).